Reading from the N-terminus, the 364-residue chain is MAGTVTVPSASVPSTPLLKDELDIVIPTIRNLDFLEMWRPFFQPYHLIIVQDGDPTKTIRVPEGFDYELYNRNDINRILGPKASCISFKDSACRCFGYMVSKKKYVFTIDDDCFVAKDPSGKDINALEQHIKNLLSPSTPFFFNTLYDPYREGADFVRGYPFSLREGAKTAVSHGLWLNIPDYDAPTQMVKPRERNSRYVDAVMTVPKGTLFPMCGMNLAFDRDLIGPAMYFGLMGDGQPIGRYDDMWAGWCMKVICDHLSLGVKTGLPYIWHSKASNPFVNLKKEYKGIFWQEDIIPFFQNATIPKECDTVQKCYLSLAEQVREKLGKIDPYFVKLADAMVTWIEAWDELNPSTAAVENGKAK.

A DXD motif motif is present at residues 110-112; it reads DDD. An N-linked (Glc...) arginine glycan is attached at Arg158.

It belongs to the RGP family. Heteromers with UAM2 and UAM3. It depends on Mn(2+) as a cofactor. Mg(2+) is required as a cofactor. In terms of processing, reversibly glycosylated in vitro at Arg-158 by UDP-glucose. Reversibly glycosylated by UDP-xylose and UDP-galactose.

The protein resides in the golgi apparatus. The enzyme catalyses UDP-beta-L-arabinofuranose = UDP-beta-L-arabinopyranose. Its function is as follows. UDP-L-arabinose mutase involved in the biosynthesis of cell wall non-cellulosic polysaccharides. Catalyzes the interconvertion of UDP-L-arabinopyranose (UDP-Arap) and UDP-L-arabinofuranose (UDP-Araf). Preferentially catalyzes the formation of UDP-Arap from UDP-Araf. At thermodynamic equilibrium in vitro the ratio of the pyranose form over the furanose form is 90:10. Is probably active as heteromer in vivo. This Oryza sativa subsp. japonica (Rice) protein is UDP-arabinopyranose mutase 1.